We begin with the raw amino-acid sequence, 272 residues long: Shikimate dehydrogenase (NADP(+)) (272 aa).

Shikimate contacts are provided by residues 14 to 16 and Thr61; that span reads SKS. The Proton acceptor role is filled by Lys65. NADP(+) is bound at residue Glu77. Residues Asn86 and Asp102 each contribute to the shikimate site. NADP(+) is bound by residues 126 to 130, 149 to 154, and Met213; these read GAGGA and NRTASR. Tyr215 is a shikimate binding site. Gly237 contributes to the NADP(+) binding site.

The protein belongs to the shikimate dehydrogenase family. In terms of assembly, homodimer.

It catalyses the reaction shikimate + NADP(+) = 3-dehydroshikimate + NADPH + H(+). The protein operates within metabolic intermediate biosynthesis; chorismate biosynthesis; chorismate from D-erythrose 4-phosphate and phosphoenolpyruvate: step 4/7. In terms of biological role, involved in the biosynthesis of the chorismate, which leads to the biosynthesis of aromatic amino acids. Catalyzes the reversible NADPH linked reduction of 3-dehydroshikimate (DHSA) to yield shikimate (SA). This chain is Shikimate dehydrogenase (NADP(+)), found in Salmonella schwarzengrund (strain CVM19633).